The following is a 1191-amino-acid chain: MPAMVPGWNHGNITRSKAEELLSRAGKDGSFLVRASESIPRAYALCVLFRNCVYTYRILPNEDDKFTVQASEGVPMRFFTKLDQLIDFYKKENMGLVTHLQYPVPLEEEDAIDEAEEDTVESVMSPPELPPRNIPMSAGPSEAKDLPLATENPRAPEVTRLSLSETLFQRLQSMDTSGLPEEHLKAIQDYLSTQLLLDSDFLKTGSSNLPHLKKLMSLLCKELHGEVIRTLPSLESLQRLFDQQLSPGLRPRPQVPGEASPITMVAKLSQLTSLLSSIEDKVKSLLHEGSESTNRRSLIPPVTFEVKSESLGIPQKMHLKVDVESGKLIVKKSKDGSEDKFYSHKKILQLIKSQKFLNKLVILVETEKEKILRKEYVFADSKKREGFCQLLQQMKNKHSEQPEPDMITIFIGTWNMGNAPPPKKITSWFLSKGQGKTRDDSADYIPHDIYVIGTQEDPLGEKEWLELLRHSLQEVTSMTFKTVAIHTLWNIRIVVLAKPEHENRISHICTDNVKTGIANTLGNKGAVGVSFMFNGTSLGFVNSHLTSGSEKKLRRNQNYMNILRFLALGDKKLSPFNITHRFTHLFWLGDLNYRVELPTWEAEAIIQKIKQQQYSDLLAHDQLLLERKDQKVFLHFEEEEITFAPTYRFERLTRDKYAYTKQKATGMKYNLPSWCDRVLWKSYPLVHVVCQSYGSTSDIMTSDHSPVFATFEAGVTSQFVSKNGPGTVDSQGQIEFLACYATLKTKSQTKFYLEFHSSCLESFVKSQEGENEEGSEGELVVRFGETLPKLKPIISDPEYLLDQHILISIKSSDSDESYGEGCIALRLETTEAQHPIYTPLTHHGEMTGHFRGEIKLQTSQGKMREKLYDFVKTERDESSGMKCLKNLTSHDPMRQWEPSGRVPACGVSSLNEMINPNYIGMGPFGQPLHGKSTLSPDQQLTAWSYDQLPKDSSLGPGRGEGPPTPPSQPPLSPKKFSSSTANRGPCPRVQEARPGDLGKVEALLQEDLLLTKPEMFENPLYGSVSSFPKLVPRKEQESPKMLRKEPPPCPDPGISSPSIVLPKAQEVESVKGTSKQAPVPVLGPTPRIRSFTCSSSAEGRMTSGDKSQGKPKASASSQAPVPVKRPVKPSRSEMSQQTTPIPAPRPPLPVKSPAVLQLQHSKGRDYRDNTELPHHGKHRQEEGLLGRTAMQ.

The SH2 domain occupies 8-104 (WNHGNITRSK…GLVTHLQYPV (97 aa)). A disordered region spans residues 122–148 (SVMSPPELPPRNIPMSAGPSEAKDLPL). Residues 127–132 (PELPPR) carry the SH3-binding 1 motif. Phosphoserine is present on S246. An NPXY motif 1 motif is present at residues 915–918 (NPNY). Y918 carries the phosphotyrosine modification. S935 carries the post-translational modification Phosphoserine. Y945 is subject to Phosphotyrosine. Disordered stretches follow at residues 947-994 (QLPK…EARP) and 1021-1191 (YGSV…TAMQ). The segment covering 962 to 972 (PPTPPSQPPLS) has biased composition (pro residues). At T964 the chain carries Phosphothreonine. Residues S967 and S972 each carry the phosphoserine modification. The SH3-binding 2 motif lies at 970–975 (PLSPKK). The interaction with DAB2 stretch occupies residues 1015-1029 (MFENPLYGSVSSFPK). Residues 1018-1021 (NPLY) carry the NPXY motif 2 motif. Phosphotyrosine is present on Y1021. The span at 1032–1046 (PRKEQESPKMLRKEP) shows a compositional bias: basic and acidic residues. Positions 1039-1050 (PKMLRKEPPPCP) match the SH3-binding 3 motif. The segment covering 1141-1150 (IPAPRPPLPV) has biased composition (pro residues). Over residues 1162 to 1184 (KGRDYRDNTELPHHGKHRQEEGL) the composition is skewed to basic and acidic residues.

Belongs to the inositol 1,4,5-trisphosphate 5-phosphatase family. Interacts with tyrosine phosphorylated form of SHC1. Interacts with tyrosine phosphorylated form of DOK1. Interacts with tyrosine phosphorylated form of DOK3. Interacts with tyrosine phosphorylated form of SLAMF1/CD150. Interacts with PTPN11/SHP-2 in response to IL-3. Interacts with receptor EPOR. Interacts with receptors MS4A2/FCER1B and FCER1G. Interacts with receptors FCGR2B and FCGR3. Interacts with receptor FCGR2A, leading to regulate gene expression during the phagocytic process. Interacts with GRB2. Interacts with PLCG1. Interacts with tyrosine kinases SRC and TEC. Interacts with CRKL. Interacts with c-Met/MET. Interacts with MILR1 (tyrosine-phosphorylated). Isoform 5 interacts with IL6ST/gp130. Can weakly interact (via NPXY motif 2) with DAB2 (via PID domain); the interaction is impaired by tyrosine phosphorylation of the NPXY motif. Interacts (via SH2 domain) with tyrosine phosphorylated KLRC1 (via ITIM). Interacts with MPL/TPOR. Tyrosine phosphorylated by the members of the SRC family after exposure to a diverse array of extracellular stimuli such as cytokines, growth factors, antibodies, chemokines, integrin ligands and hypertonic and oxidative stress. Phosphorylated upon IgG receptor FCGR2B-binding. Specifically expressed in immune and hematopoietic cells. Levels vary considerably within this compartment. Lost during erythropoiesis when erythroid cells become Ter119+. Increases substantially with T-cell maturation and when resting B-cells are activated. Also present in mature granulocytes, monocyte/macrophages, mast cells and platelets. Isoform 5 is the only form expressed in embryonic stem (ES) cells and is coexpressed with other isoforms in hematopoietic stem cells, and disappears with differentiation.

The protein resides in the cytoplasm. It is found in the cell membrane. It localises to the membrane raft. Its subcellular location is the cytoskeleton. It catalyses the reaction a 1,2-diacyl-sn-glycero-3-phospho-(1D-myo-inositol-3,4,5-trisphosphate) + H2O = a 1,2-diacyl-sn-glycero-3-phospho-(1D-myo-inositol-3,4-bisphosphate) + phosphate. The enzyme catalyses a 1,2-diacyl-sn-glycero-3-phospho-(1D-myo-inositol-4,5-bisphosphate) + H2O = a 1,2-diacyl-sn-glycero-3-phospho-(1D-myo-inositol 4-phosphate) + phosphate. It carries out the reaction 1D-myo-inositol 1,3,4,5-tetrakisphosphate + H2O = 1D-myo-inositol 1,3,4-trisphosphate + phosphate. Activated upon translocation to the sites of synthesis of PtdIns(3,4,5)P3 in the membrane. Its function is as follows. Phosphatidylinositol (PtdIns) phosphatase that specifically hydrolyzes the 5-phosphate of phosphatidylinositol-3,4,5-trisphosphate (PtdIns(3,4,5)P3) to produce PtdIns(3,4)P2, thereby negatively regulating the PI3K (phosphoinositide 3-kinase) pathways. Also able to hydrolyze the 5-phosphate of phosphatidylinositol-4,5-bisphosphate (PtdIns(4,5)P3) and inositol 1,3,4,5-tetrakisphosphate. Acts as a negative regulator of B-cell antigen receptor signaling. Mediates signaling from the FC-gamma-RIIB receptor (FCGR2B), playing a central role in terminating signal transduction from activating immune/hematopoietic cell receptor systems. Acts as a negative regulator of myeloid cell proliferation/survival and chemotaxis, mast cell degranulation, immune cells homeostasis, integrin alpha-IIb/beta-3 signaling in platelets and JNK signaling in B-cells. Regulates proliferation of osteoclast precursors, macrophage programming, phagocytosis and activation and is required for endotoxin tolerance. Involved in the control of cell-cell junctions, CD32a signaling in neutrophils and modulation of EGF-induced phospholipase C activity. Key regulator of neutrophil migration, by governing the formation of the leading edge and polarization required for chemotaxis. Modulates FCGR3/CD16-mediated cytotoxicity in NK cells. Mediates the activin/TGF-beta-induced apoptosis through its Smad-dependent expression. This Mus musculus (Mouse) protein is Phosphatidylinositol 3,4,5-trisphosphate 5-phosphatase 1 (Inpp5d).